We begin with the raw amino-acid sequence, 354 residues long: Protein FAM181A (354 aa).

Basic and acidic residues-rich tracts occupy residues methionine 1–aspartate 14 and tyrosine 129–leucine 142. 3 disordered regions span residues methionine 1–serine 35, leucine 117–lysine 160, and alanine 172–arginine 193.

The protein belongs to the FAM181 family.

The polypeptide is Protein FAM181A (FAM181A) (Homo sapiens (Human)).